We begin with the raw amino-acid sequence, 710 residues long: Early transcription factor 82 kDa subunit (710 aa).

It belongs to the poxviridae VETF large subunit family. In terms of assembly, heterodimer of a 70 kDa and a 82 kDa subunit. Part of the early transcription complex composed of ETF, RAP94/OPG109, and the DNA-directed RNA polymerase.

Its subcellular location is the virion. Its function is as follows. Acts with RNA polymerase to initiate transcription from early gene promoters. Is recruited by the RPO-associated protein of 94 kDa RAP94/OPG109 to form the early transcription complex, which also contains the core RNA polymerase. ETF heterodimer binds to early gene promoters. This Monkeypox virus protein is Early transcription factor 82 kDa subunit (OPG133).